We begin with the raw amino-acid sequence, 400 residues long: Ribosomal RNA large subunit methyltransferase I (400 aa).

Residues 6-84 enclose the PUA domain; the sequence is FPRLVLAKGR…NEAIDSAFFE (79 aa).

This sequence belongs to the methyltransferase superfamily. RlmI family.

It is found in the cytoplasm. It catalyses the reaction cytidine(1962) in 23S rRNA + S-adenosyl-L-methionine = 5-methylcytidine(1962) in 23S rRNA + S-adenosyl-L-homocysteine + H(+). In terms of biological role, specifically methylates the cytosine at position 1962 (m5C1962) of 23S rRNA. In Klebsiella pneumoniae subsp. pneumoniae (strain ATCC 700721 / MGH 78578), this protein is Ribosomal RNA large subunit methyltransferase I.